The chain runs to 233 residues: Small ribosomal subunit protein eS4 (233 aa).

An S4 RNA-binding domain is found at 37–99 (VPLVVVLRDV…RDEYYRVFPD (63 aa)).

The protein belongs to the eukaryotic ribosomal protein eS4 family.

In Halobacterium salinarum (strain ATCC 29341 / DSM 671 / R1), this protein is Small ribosomal subunit protein eS4.